The primary structure comprises 58 residues: Large ribosomal subunit protein uL30 (58 aa).

The protein belongs to the universal ribosomal protein uL30 family. Part of the 50S ribosomal subunit.

This Vibrio vulnificus (strain CMCP6) protein is Large ribosomal subunit protein uL30.